A 46-amino-acid chain; its full sequence is Large ribosomal subunit protein bL33B (46 aa).

The protein belongs to the bacterial ribosomal protein bL33 family.

The protein is Large ribosomal subunit protein bL33B (rpmG2) of Mycoplasmopsis pulmonis (strain UAB CTIP) (Mycoplasma pulmonis).